The primary structure comprises 220 residues: MARMKARSAKGKRVAKDTWKSKVWYNIYTPQSFGGDVIGQTPANDPSALMGRISEISLRDLTNEHSKHMTRMYFKVDGVSGNNAITQFVGHDTTREYLKSQIRRRRSKINVIIDVRTKDGFKVRVKALVLTAVRARDYHKTEIRVKMEQIIKEMANETAFAEFVHAMVMGGVGSKIYSECKKMFPLKRVEIFKSEVLEFGKAVLEVTPEAQEAVEGEEKQ.

Belongs to the eukaryotic ribosomal protein eS1 family.

The polypeptide is Small ribosomal subunit protein eS1 (Methanococcus vannielii (strain ATCC 35089 / DSM 1224 / JCM 13029 / OCM 148 / SB)).